Consider the following 342-residue polypeptide: Phosphate acyltransferase (342 aa).

This sequence belongs to the PlsX family. Homodimer. Probably interacts with PlsY.

The protein resides in the cytoplasm. It carries out the reaction a fatty acyl-[ACP] + phosphate = an acyl phosphate + holo-[ACP]. It functions in the pathway lipid metabolism; phospholipid metabolism. In terms of biological role, catalyzes the reversible formation of acyl-phosphate (acyl-PO(4)) from acyl-[acyl-carrier-protein] (acyl-ACP). This enzyme utilizes acyl-ACP as fatty acyl donor, but not acyl-CoA. The protein is Phosphate acyltransferase of Shewanella pealeana (strain ATCC 700345 / ANG-SQ1).